We begin with the raw amino-acid sequence, 806 residues long: Acetyl-CoA decarbonylase/synthase complex subunit alpha 1 (806 aa).

6 residues coordinate [4Fe-4S] cluster: Cys73, Cys76, Cys77, Cys79, Cys84, and Cys94. His117 serves as a coordination point for CO. 3 residues coordinate [Ni-4Fe-4S] cluster: His250, Cys278, and Cys323. 4Fe-4S ferredoxin-type domains follow at residues Ser406–Ala436 and Phe445–Ile475. Cys417, Cys420, Cys423, Cys427, Cys455, Cys458, Cys461, and Cys465 together coordinate [4Fe-4S] cluster. [Ni-4Fe-4S] cluster is bound by residues Cys523, Cys552, and Cys587.

This sequence belongs to the Ni-containing carbon monoxide dehydrogenase family. Heterotetramer of two alpha and two epsilon subunits. The ACDS complex is made up of alpha, epsilon, beta, gamma and delta subunits with a probable stoichiometry of (alpha(2)epsilon(2))(4)-beta(8)-(gamma(1)delta(1))(8). Requires [4Fe-4S] cluster as cofactor. [Ni-4Fe-4S] cluster serves as cofactor.

The catalysed reaction is CO + 2 oxidized [2Fe-2S]-[ferredoxin] + H2O = 2 reduced [2Fe-2S]-[ferredoxin] + CO2 + 2 H(+). It participates in one-carbon metabolism; methanogenesis from acetate. Part of the ACDS complex that catalyzes the reversible cleavage of acetyl-CoA, allowing growth on acetate as sole source of carbon and energy. The alpha-epsilon subcomponent functions as a carbon monoxide dehydrogenase. In Methanosarcina mazei (strain ATCC BAA-159 / DSM 3647 / Goe1 / Go1 / JCM 11833 / OCM 88) (Methanosarcina frisia), this protein is Acetyl-CoA decarbonylase/synthase complex subunit alpha 1.